The chain runs to 125 residues: Nuclear envelope phosphatase-regulatory subunit 1 (125 aa).

Transmembrane regions (helical) follow at residues Met-33–Pro-53 and Trp-65–Ile-85.

The protein belongs to the CNEP1R1 family.

The protein localises to the nucleus membrane. It is found in the cytoplasm. Functionally, may form with the serine/threonine protein phosphatase ctdnep1 an active complex dephosphorylating and activating lipins. Lipins are phosphatidate phosphatases that catalyze the conversion of phosphatidic acid to diacylglycerol and control the metabolism of fatty acids at different levels. May indirectly modulate the lipid composition of nuclear and/or endoplasmic reticulum membranes and be required for proper nuclear membrane morphology and/or dynamics. May also indirectly regulate the production of lipid droplets and triacylglycerol. The polypeptide is Nuclear envelope phosphatase-regulatory subunit 1 (cnep1r1) (Danio rerio (Zebrafish)).